Here is a 443-residue protein sequence, read N- to C-terminus: Adenylate cyclase (443 aa).

Transmembrane regions (helical) follow at residues 47-69 (VLTI…QLAT), 74-93 (WYIA…VPLL), 98-120 (GLVA…GWDV), 124-143 (AGAQ…LVGI), 148-167 (LAVG…EFLV), and 180-202 (SVSF…WFAL). Over 203–443 (RDTARAEAVM…RGAEPRTAGV (241 aa)) the chain is Cytoplasmic. The region spanning 251–378 (SVLFADIVGF…DAVNVASRME (128 aa)) is the Guanylate cyclase domain. Residues Asp256 and Asp300 each coordinate Mg(2+).

It belongs to the adenylyl cyclase class-4/guanylyl cyclase family. Homodimer. Can also exist as monomer. Mg(2+) is required as a cofactor. Requires Mn(2+) as cofactor.

The protein localises to the cell membrane. It carries out the reaction ATP = 3',5'-cyclic AMP + diphosphate. This chain is Adenylate cyclase (cya), found in Mycobacterium bovis (strain ATCC BAA-935 / AF2122/97).